A 157-amino-acid polypeptide reads, in one-letter code: MKLNEIPAVPGNQQSRNRVGRGPGSGNGKTAGRGHKGQKARSGGFHKSGFEGGQMPLQRRLPKRGFKNFTRKEYTIVQVEDLEKFFDAGSEVNAEALNDLGLLGKKQKSGIKLLANGDITKAITVYVDKASAAAVAKMEAAGGKVVLAVVADPEGDA.

The disordered stretch occupies residues 1–64; it reads MKLNEIPAVP…MPLQRRLPKR (64 aa). Residues 21–31 are compositionally biased toward gly residues; sequence RGPGSGNGKTA.

It belongs to the universal ribosomal protein uL15 family. Part of the 50S ribosomal subunit.

In terms of biological role, binds to the 23S rRNA. The polypeptide is Large ribosomal subunit protein uL15 (Magnetococcus marinus (strain ATCC BAA-1437 / JCM 17883 / MC-1)).